Consider the following 68-residue polypeptide: Neuronal regeneration-related protein (68 aa).

The segment at Met21 to Ser54 is disordered. Positions Thr44–Ser54 are enriched in polar residues.

Interacts with the latency-associated peptides (LAP) of TGFB1 and TGFB2; the interaction results in a decrease in TGFB autoinduction. Interacts with FLNA. In terms of processing, phosphorylated on Ser-59. Phosphorylation decreases stability and activity.

The protein resides in the cytoplasm. May have roles in neural function and cellular differentiation. Ectopic expression promotes axonal regeneration, induces differentiation of fibroblast into myofibroblast, induces myofibroblast ameboid migration, augments motility of gliomas, and increases retinoic-acid regulation of lipid-droplet biogenesis. Down-regulates the expression of TGFB1 and TGFB2 but not of TGFB3. May play a role in the regulation of alveolar generation. This Macaca fascicularis (Crab-eating macaque) protein is Neuronal regeneration-related protein (NREP).